The sequence spans 174 residues: Tat proofreading chaperone TtrD (174 aa).

This sequence belongs to the TorD/DmsD family. Monomer.

Its subcellular location is the cytoplasm. Functionally, binds specifically to the Tat signal peptide of the TtrA subunit of the tetrathionate reductase. The protein is Tat proofreading chaperone TtrD (ttrD) of Archaeoglobus fulgidus (strain ATCC 49558 / DSM 4304 / JCM 9628 / NBRC 100126 / VC-16).